The primary structure comprises 263 residues: Hydroxyethylthiazole kinase (263 aa).

Position 39 (Met-39) interacts with substrate. 2 residues coordinate ATP: Lys-115 and Thr-160. A substrate-binding site is contributed by Gly-187.

The protein belongs to the Thz kinase family. Mg(2+) is required as a cofactor.

It carries out the reaction 5-(2-hydroxyethyl)-4-methylthiazole + ATP = 4-methyl-5-(2-phosphooxyethyl)-thiazole + ADP + H(+). The protein operates within cofactor biosynthesis; thiamine diphosphate biosynthesis; 4-methyl-5-(2-phosphoethyl)-thiazole from 5-(2-hydroxyethyl)-4-methylthiazole: step 1/1. Functionally, catalyzes the phosphorylation of the hydroxyl group of 4-methyl-5-beta-hydroxyethylthiazole (THZ). The protein is Hydroxyethylthiazole kinase of Staphylococcus saprophyticus subsp. saprophyticus (strain ATCC 15305 / DSM 20229 / NCIMB 8711 / NCTC 7292 / S-41).